Reading from the N-terminus, the 261-residue chain is Signal recognition particle SEC65 subunit (261 aa).

It belongs to the SRP19 family. In terms of assembly, fungal signal recognition particle consists of a 7S RNA molecule (scR1) and at least six protein subunits: SRP72, SRP68, SRP54, SEC65, SRP21 and SRP14.

The protein localises to the cytoplasm. Functionally, signal-recognition-particle assembly has a crucial role in targeting secretory proteins to the rough endoplasmic reticulum membrane. It must be involved intimately in the translocation of a wide variety of protein substrates. The protein is Signal recognition particle SEC65 subunit (SEC65) of Eremothecium gossypii (strain ATCC 10895 / CBS 109.51 / FGSC 9923 / NRRL Y-1056) (Yeast).